The following is an 817-amino-acid chain: Protein Jade-3 (817 aa).

The interval 1-38 is disordered; sequence MKRLRNLSSSDSSDNESPSTSFSSCFQHKGKGKCTADD. A compositionally biased stretch (low complexity) spans 8–24; it reads SSSDSSDNESPSTSFSS. A PHD-type 1 zinc finger spans residues 202–252; that stretch reads DVICDVCRSPDSEEGNDMVFCDRCNICVHQACYGILKVPEGSWLCRTCVLG. The C2HC pre-PHD-type zinc finger occupies 254 to 288; it reads HPQCILCPKTGGAMKATRTGTKWAHVSCALWIPEV. Residues 312 to 368 form a PHD-type 2 zinc finger; sequence LVCSLCKLKTGACIQCSVKSCITAFHVTCAFEHSLEMKTILDEGDEVKFKSYCLKHS. Disordered regions lie at residues 375–396, 665–689, and 719–817; these read ISEQ…SERT, NGVL…QNSE, and LVRT…SVQR. The segment covering 379–396 has biased composition (basic and acidic residues); it reads EEPHKTHSDNRPTESERT. The span at 667–689 shows a compositional bias: polar residues; it reads VLSSGDRTQRDSSSQTSPGQNSE. The segment covering 722 to 743 has biased composition (basic and acidic residues); it reads TTEDLRSSEKPQRRQSVKERLW. Positions 747 to 758 are enriched in polar residues; it reads PADTQTSGTPYQ. The segment covering 777-799 has biased composition (basic and acidic residues); that stretch reads DENKDHMLLRRNSRESPNRDSCR. Positions 801–810 are enriched in basic residues; it reads SRIRGKRKMT.

This sequence belongs to the JADE family. Component of the HBO1 complex.

Scaffold subunit of some HBO1 complexes, which have a histone H4 acetyltransferase activity. The polypeptide is Protein Jade-3 (jade3) (Xenopus tropicalis (Western clawed frog)).